Consider the following 440-residue polypeptide: D-serine dehydratase (440 aa).

The residue at position 116 (Lys116) is an N6-(pyridoxal phosphate)lysine.

The protein belongs to the serine/threonine dehydratase family. DsdA subfamily. As to quaternary structure, monomer. Pyridoxal 5'-phosphate serves as cofactor.

It catalyses the reaction D-serine = pyruvate + NH4(+). In Salmonella dublin (strain CT_02021853), this protein is D-serine dehydratase.